A 183-amino-acid chain; its full sequence is Holliday junction branch migration complex subunit RuvA (183 aa).

Positions 1–64 (MIVAIEGIVS…EDSHKLYGFL (64 aa)) are domain I. Positions 65-138 (DTNEQRMFEL…SDAKINIENS (74 aa)) are domain II. A region of interest (flexible linker) is located at residue Ser-138. Positions 138–183 (SNQDHAQALAALLSLGFKQENILKVLRTCESQNTSELIKEALKKLA) are domain III.

The protein belongs to the RuvA family. As to quaternary structure, homotetramer. Forms an RuvA(8)-RuvB(12)-Holliday junction (HJ) complex. HJ DNA is sandwiched between 2 RuvA tetramers; dsDNA enters through RuvA and exits via RuvB. An RuvB hexamer assembles on each DNA strand where it exits the tetramer. Each RuvB hexamer is contacted by two RuvA subunits (via domain III) on 2 adjacent RuvB subunits; this complex drives branch migration. In the full resolvosome a probable DNA-RuvA(4)-RuvB(12)-RuvC(2) complex forms which resolves the HJ.

The protein resides in the cytoplasm. Functionally, the RuvA-RuvB-RuvC complex processes Holliday junction (HJ) DNA during genetic recombination and DNA repair, while the RuvA-RuvB complex plays an important role in the rescue of blocked DNA replication forks via replication fork reversal (RFR). RuvA specifically binds to HJ cruciform DNA, conferring on it an open structure. The RuvB hexamer acts as an ATP-dependent pump, pulling dsDNA into and through the RuvAB complex. HJ branch migration allows RuvC to scan DNA until it finds its consensus sequence, where it cleaves and resolves the cruciform DNA. The protein is Holliday junction branch migration complex subunit RuvA of Campylobacter lari (strain RM2100 / D67 / ATCC BAA-1060).